A 220-amino-acid chain; its full sequence is 2-hydroxy-3-keto-5-methylthiopentenyl-1-phosphate phosphatase (220 aa).

This sequence belongs to the HAD-like hydrolase superfamily. MtnX family.

The enzyme catalyses 2-hydroxy-5-methylsulfanyl-3-oxopent-1-enyl phosphate + H2O = 1,2-dihydroxy-5-(methylsulfanyl)pent-1-en-3-one + phosphate. It functions in the pathway amino-acid biosynthesis; L-methionine biosynthesis via salvage pathway; L-methionine from S-methyl-5-thio-alpha-D-ribose 1-phosphate: step 4/6. Functionally, dephosphorylates 2-hydroxy-3-keto-5-methylthiopentenyl-1-phosphate (HK-MTPenyl-1-P) yielding 1,2-dihydroxy-3-keto-5-methylthiopentene (DHK-MTPene). The sequence is that of 2-hydroxy-3-keto-5-methylthiopentenyl-1-phosphate phosphatase from Geobacillus thermodenitrificans (strain NG80-2).